The chain runs to 132 residues: Transmembrane protein 170B (132 aa).

At 1–37 (MRAEGADHSMINLSVQQVLSLWAHGTVLRNLTEMWYW) the chain is on the extracellular side. A glycan (N-linked (GlcNAc...) asparagine) is linked at asparagine 12. A helical membrane pass occupies residues 38–58 (IFLWALFSSLFVHGAAGVLMF). Residues 59-68 (VMLQRHRQGR) lie on the Cytoplasmic side of the membrane. The chain crosses the membrane as a helical span at residues 69–89 (VISIIAVSIGFLASVTGAMIT). Over 90 to 104 (SAAVAGIYRVAGKNM) the chain is Extracellular. The helical transmembrane segment at 105–125 (APLEALVWGVGQTVLTLIISF) threads the bilayer. At 126 to 132 (SRILATL) the chain is on the cytoplasmic side.

The protein belongs to the TMEM170 family. Interacts with CTNNB1.

Its subcellular location is the cell membrane. In Mus musculus (Mouse), this protein is Transmembrane protein 170B.